Here is a 470-residue protein sequence, read N- to C-terminus: tRNA(Ile)-lysidine synthase (470 aa).

Residue 32 to 37 coordinates ATP; it reads SGGVDS.

This sequence belongs to the tRNA(Ile)-lysidine synthase family.

It is found in the cytoplasm. The enzyme catalyses cytidine(34) in tRNA(Ile2) + L-lysine + ATP = lysidine(34) in tRNA(Ile2) + AMP + diphosphate + H(+). Ligates lysine onto the cytidine present at position 34 of the AUA codon-specific tRNA(Ile) that contains the anticodon CAU, in an ATP-dependent manner. Cytidine is converted to lysidine, thus changing the amino acid specificity of the tRNA from methionine to isoleucine. The chain is tRNA(Ile)-lysidine synthase from Shewanella woodyi (strain ATCC 51908 / MS32).